A 273-amino-acid chain; its full sequence is uncharacterized protein (273 aa).

Residues 7–25 traverse the membrane as a helical segment; that stretch reads FFRWAFLIATVYVAYYFLV. Disordered stretches follow at residues 34–154 and 168–273; these read KPQK…LKMK and LHNS…DSLW. Residues 36-54 show a composition bias toward basic residues; that stretch reads QKSKLTKLGKQKQRQKQKN. The segment covering 55-91 has biased composition (basic and acidic residues); it reads TKKDTLVNRETPSKKSQKLETSDALKSKSKDSSKKEP. Positions 92–101 are enriched in low complexity; that stretch reads VVVPKKGTPK. Positions 115 to 144 are enriched in basic and acidic residues; sequence PKKEKLVGKNPAEKEDTTDVEDTQKLEQKH. The segment covering 145–154 has biased composition (polar residues); sequence STTPSSLKMK. A compositionally biased stretch (basic residues) spans 201–212; it reads KRQRQNQQKKLR. Basic and acidic residues predominate over residues 213–240; it reads AKEMQELADEEQRRRLAAHRKELHEANR. Residues 245–266 are compositionally biased toward polar residues; sequence LNNSSRSAYSYINNGQAGSSKG.

The protein localises to the cytoplasm. Its subcellular location is the membrane. This is an uncharacterized protein from Schizosaccharomyces pombe (strain 972 / ATCC 24843) (Fission yeast).